Consider the following 98-residue polypeptide: uncharacterized protein (98 aa).

It belongs to the HesB/IscA family.

This is an uncharacterized protein from Staphylococcus saprophyticus subsp. saprophyticus (strain ATCC 15305 / DSM 20229 / NCIMB 8711 / NCTC 7292 / S-41).